A 180-amino-acid chain; its full sequence is uncharacterized protein (180 aa).

In terms of domain architecture, Nudix hydrolase spans 35 to 163 (LRHRATYIVV…TPDSLKALAL (129 aa)). The short motif at 72–94 (GGVVQADEQLLESARREAEEELG) is the Nudix box element. Positions 88 and 92 each coordinate Mg(2+).

The protein belongs to the Nudix hydrolase family. Requires Mg(2+) as cofactor.

This is an uncharacterized protein from Escherichia coli O157:H7.